Reading from the N-terminus, the 326-residue chain is Putative ABC transporter ATP-binding protein MPN_334 (326 aa).

An ABC transporter domain is found at 7-239 (VEVKHLEKEF…NFGYRLKVNN (233 aa)). 42 to 49 (GQNGAGKT) is an ATP binding site.

The protein belongs to the ABC transporter superfamily.

This chain is Putative ABC transporter ATP-binding protein MPN_334, found in Mycoplasma pneumoniae (strain ATCC 29342 / M129 / Subtype 1) (Mycoplasmoides pneumoniae).